The sequence spans 195 residues: Dephospho-CoA kinase (195 aa).

One can recognise a DPCK domain in the interval 4–195 (IIGLTGGIAS…EQILDALQRL (192 aa)). An ATP-binding site is contributed by 12–17 (ASGKST).

This sequence belongs to the CoaE family.

The protein localises to the cytoplasm. The catalysed reaction is 3'-dephospho-CoA + ATP = ADP + CoA + H(+). It participates in cofactor biosynthesis; coenzyme A biosynthesis; CoA from (R)-pantothenate: step 5/5. Catalyzes the phosphorylation of the 3'-hydroxyl group of dephosphocoenzyme A to form coenzyme A. The sequence is that of Dephospho-CoA kinase from Streptococcus agalactiae serotype III (strain NEM316).